Here is a 78-residue protein sequence, read N- to C-terminus: Esculentin-2ISa (78 aa).

Residues 1 to 22 (MFTLKKSLLLLFFLGTISLSVC) form the signal peptide. Positions 23–39 (KQERDADYEDKGEVEEV) are cleaved as a propeptide — removed in mature form. A disulfide bond links Cys-72 and Cys-78.

In terms of tissue distribution, expressed by the skin glands.

Its subcellular location is the secreted. Has antimicrobial activity against Gram-negative bacterium E.coli ATCC 8739 (MIC=12.5 ug), against Gram positive bacteria S.aureus ATCC 6538 (MIC=3.1 ug), methicillin-resistant S.aureus ATCC 43300 (MIC=25 ug), B.subtilis ATCC 6633 (MIC=6.3 ug) and against fungus C.albicans ATCC 90028 (MIC=100 ug). This Odorrana ishikawae (Ishikawa's frog) protein is Esculentin-2ISa.